Consider the following 473-residue polypeptide: Aspartyl aminopeptidase 1 (473 aa).

Histidine 93 contributes to the Zn(2+) binding site. Residue histidine 168 coordinates substrate. Zn(2+) contacts are provided by aspartate 262, glutamate 298, glutamate 299, and aspartate 343. Glutamate 298 serves as a coordination point for substrate. 4 residues coordinate substrate: aspartate 343, histidine 346, lysine 371, and tyrosine 378. Histidine 437 is a binding site for Zn(2+).

Belongs to the peptidase M18 family. In terms of assembly, tetrahedron-shaped homododecamer built from six homodimers. Interacts with autophagy receptor Nbr1. Zn(2+) serves as cofactor.

The protein resides in the cytoplasm. It is found in the vacuole lumen. It catalyses the reaction Release of an N-terminal aspartate or glutamate from a peptide, with a preference for aspartate.. Aspartyl aminopeptidase that is able to remove aspartyl residue at N-terminus of angiotensin I. Also acts as a chaperone and efficiently suppressed the thermal aggregation of citrate synthase. The polypeptide is Aspartyl aminopeptidase 1 (ape4) (Schizosaccharomyces pombe (strain 972 / ATCC 24843) (Fission yeast)).